A 154-amino-acid chain; its full sequence is C-type lectin 16 (154 aa).

The N-terminal stretch at 1-20 is a signal peptide; the sequence is MALSLYLIAVICSLVGFTAS. Residues 27–152 enclose the C-type lectin domain; sequence DNRFCFPNVV…CASMRRFVCE (126 aa). 2 disulfides stabilise this stretch: C46-C151 and C123-C143.

In terms of assembly, (Microbial infection) Interacts with non-structural protein 1 of dengue virus type 2. Interacts with envelope protein E of dengue virus type 2. Female salivary gland (at protein level). Not detected in female carcass without salivary glands (at protein level). Not detected in male tissues (at protein level).

The protein resides in the secreted. Functionally, putative lectin. May have a regulatory role in mosquito immunity. Probably suppresses replication of dengue virus type 2 in mosquito salivary glands. This is C-type lectin 16 from Aedes aegypti (Yellowfever mosquito).